The sequence spans 127 residues: Large ribosomal subunit protein eL32 (127 aa).

Basic and acidic residues predominate over residues 37–48; it reads KWRKPKGTDSKM. The tract at residues 37–65 is disordered; sequence KWRKPKGTDSKMRVKLKGKARSPSIGWSS.

Belongs to the eukaryotic ribosomal protein eL32 family.

This chain is Large ribosomal subunit protein eL32, found in Thermococcus sibiricus (strain DSM 12597 / MM 739).